The chain runs to 457 residues: Ig mu chain C region (457 aa).

Residues 1–105 (SSSAPLLFPL…GEKEKKVELQ (105 aa)) form a CH1 region. Cysteines 27 and 89 form a disulfide. N-linked (GlcNAc...) asparagine glycosylation is found at N45 and N113. Residues 106–220 (VTPELPPNVS…KNVSSVCMGD (115 aa)) form a CH2 region. The cysteines at positions 136 and 200 are disulfide-linked. N-linked (GlcNAc...) asparagine glycans are attached at residues N212, N276, and N283. Positions 221-326 (DTSTGISVFL…PLKQSLSRPK (106 aa)) are CH3. 2 cysteine pairs are disulfide-bonded: C248–C307 and C355–C417. Residues 327 to 457 (DVANDPPSVF…VLSDTASTCY (131 aa)) form a CH4 region. The N-linked (GlcNAc...) asparagine glycan is linked to N444.

In Suncus murinus (Asian house shrew), this protein is Ig mu chain C region.